Here is a 470-residue protein sequence, read N- to C-terminus: MSTTTPPGQSALPPEAWAPLLRLSRLAGRPLERFLHIEAASGILLLVAAAIALLWANSPWAESYAHFWHTPLGIRVGDFTFERSLEWVVNDGLMAIFFFVVGMEIRREVHQGELSELRRAALPAAAALGGMLVPAGLYLLLADTPDTRSGWGVPMATDIAFAVGILTLLGSRVPPALRVLLLALAVIDDLGAIIVIAVFYSSGVAITGLLVAALGIVGVFAMQRFGVRSKWAYIVPAFVAWAGVYSAGIHPTIAGVIIGLITPVRTWLGPEGFVTGARTELEHIAQAQPGELSSHHLSETLRRVDAARREAMSPSESLIATLHPWVAFGIMPVFALANAGVPISSEPLDAASWTVALATATGLLVGKPLGVIGACWLALRLRLATLPKGLGMRELLVLGSTAGIGFTMALFIAQLAFTETKLLAAGKLGVLAASGAAAVVALVLGRWLLTTSARPGAARSVDEAERSTAL.

Transmembrane regions (helical) follow at residues 34 to 54 (FLHI…IALL), 85 to 105 (LEWV…GMEI), 121 to 141 (ALPA…YLLL), 150 to 170 (GWGV…TLLG), 179 to 199 (VLLL…IAVF), 202 to 222 (SGVA…VFAM), 241 to 261 (WAGV…IGLI), 317 to 337 (SLIA…FALA), 357 to 377 (LATA…ACWL), 395 to 415 (LLVL…IAQL), and 423 to 443 (LAAG…VALV).

Belongs to the NhaA Na(+)/H(+) (TC 2.A.33) antiporter family.

Its subcellular location is the cell inner membrane. It catalyses the reaction Na(+)(in) + 2 H(+)(out) = Na(+)(out) + 2 H(+)(in). Na(+)/H(+) antiporter that extrudes sodium in exchange for external protons. The polypeptide is Na(+)/H(+) antiporter NhaA 2 (Myxococcus xanthus (strain DK1622)).